The sequence spans 153 residues: 6,7-dimethyl-8-ribityllumazine synthase (153 aa).

Residues F22, 56-58 (AFE), and 80-82 (CVI) contribute to the 5-amino-6-(D-ribitylamino)uracil site. 85 to 86 (AT) provides a ligand contact to (2S)-2-hydroxy-3-oxobutyl phosphate. H88 acts as the Proton donor in catalysis. 5-amino-6-(D-ribitylamino)uracil is bound at residue F113. A (2S)-2-hydroxy-3-oxobutyl phosphate-binding site is contributed by R127.

Belongs to the DMRL synthase family.

The catalysed reaction is (2S)-2-hydroxy-3-oxobutyl phosphate + 5-amino-6-(D-ribitylamino)uracil = 6,7-dimethyl-8-(1-D-ribityl)lumazine + phosphate + 2 H2O + H(+). It participates in cofactor biosynthesis; riboflavin biosynthesis; riboflavin from 2-hydroxy-3-oxobutyl phosphate and 5-amino-6-(D-ribitylamino)uracil: step 1/2. Catalyzes the formation of 6,7-dimethyl-8-ribityllumazine by condensation of 5-amino-6-(D-ribitylamino)uracil with 3,4-dihydroxy-2-butanone 4-phosphate. This is the penultimate step in the biosynthesis of riboflavin. In Endomicrobium trichonymphae, this protein is 6,7-dimethyl-8-ribityllumazine synthase.